The chain runs to 391 residues: Ferrochelatase (391 aa).

The Fe cation site is built by His-196 and Glu-281.

This sequence belongs to the ferrochelatase family.

It is found in the cytoplasm. The catalysed reaction is heme b + 2 H(+) = protoporphyrin IX + Fe(2+). It participates in porphyrin-containing compound metabolism; protoheme biosynthesis; protoheme from protoporphyrin-IX: step 1/1. Functionally, catalyzes the ferrous insertion into protoporphyrin IX. The chain is Ferrochelatase from Prochlorococcus marinus (strain MIT 9312).